The primary structure comprises 184 residues: NEDD8-conjugating enzyme UBC12 (184 aa).

A disordered region spans residues 10–29; that stretch reads EKQRQAAQAQAPAQGRSAAS. Over residues 14–29 the composition is skewed to low complexity; it reads QAAQAQAPAQGRSAAS. The UBC core domain maps to 30–174; sequence PAQLRVEKDL…VQATMMGGHL (145 aa). The Glycyl thioester intermediate role is filled by Cys112.

Belongs to the ubiquitin-conjugating enzyme family. UBC12 subfamily.

The enzyme catalyses [E1 NEDD8-activating enzyme]-S-[NEDD8 protein]-yl-L-cysteine + [E2 NEDD8-conjugating enzyme]-L-cysteine = [E1 NEDD8-activating enzyme]-L-cysteine + [E2 NEDD8-conjugating enzyme]-S-[NEDD8-protein]-yl-L-cysteine.. The protein operates within protein modification; protein neddylation. Accepts the ubiquitin-like protein NEDD8/RUB1 from the UBA3-ULA1 E1 complex and catalyzes its covalent attachment to other proteins. The polypeptide is NEDD8-conjugating enzyme UBC12 (UBC12) (Eremothecium gossypii (strain ATCC 10895 / CBS 109.51 / FGSC 9923 / NRRL Y-1056) (Yeast)).